Consider the following 177-residue polypeptide: ADP-ribosylation factor-like protein 17 (177 aa).

Residue G2 is the site of N-myristoyl glycine attachment. GTP is bound by residues 24–31, 67–71, and 125–128; these read SLDTAGKT, DVGSH, and LPHS.

Belongs to the small GTPase superfamily. Arf family.

It localises to the golgi apparatus. GTP-binding protein that functions as an allosteric activator of the cholera toxin catalytic subunit, an ADP-ribosyltransferase. Involved in protein trafficking; may modulate vesicle budding and uncoating within the Golgi apparatus. This is ADP-ribosylation factor-like protein 17 (ARL17A) from Homo sapiens (Human).